The chain runs to 1049 residues: Retinoblastoma-like protein 1 (1049 aa).

A phosphothreonine mark is found at threonine 332, threonine 369, and threonine 385. The tract at residues 385-584 is domain A; that stretch reads TPVASATQSV…WEALRASANK (200 aa). The tract at residues 385 to 944 is pocket; binds T and E1A; that stretch reads TPVASATQSV…GRVKSFALKY (560 aa). The interval 585 to 779 is spacer; the sequence is VPSCEEVIFP…TQDAPLTGIS (195 aa). Phosphoserine is present on residues serine 640, serine 650, serine 748, and serine 761. A domain B region spans residues 780–944; the sequence is KPKRTGSLAL…GRVKSFALKY (165 aa). A phosphoserine mark is found at serine 959, serine 970, and serine 983. Threonine 992 carries the phosphothreonine modification. 2 positions are modified to phosphoserine: serine 1004 and serine 1022.

The protein belongs to the retinoblastoma protein (RB) family. Component of the DREAM complex (also named LINC complex) at least composed of E2F4, E2F5, LIN9, LIN37, LIN52, LIN54, MYBL1, MYBL2, RBL1, RBL2, RBBP4, TFDP1 and TFDP2. The complex exists in quiescent cells where it represses cell cycle-dependent genes. It dissociates in S phase when LIN9, LIN37, LIN52 and LIN54 form a subcomplex that binds to MYBL2. Interacts with AATF. Interacts with KDM5A. Interacts with KMT5B and KMT5C. Interacts with USP4. Interacts with RBBP9. In terms of processing, cell-cycle arrest properties are inactivated by phosphorylation on Thr-332, Ser-640, Ser-959 and Ser-970 by CDK4.

It is found in the nucleus. Its function is as follows. Key regulator of entry into cell division. Directly involved in heterochromatin formation by maintaining overall chromatin structure and, in particular, that of constitutive heterochromatin by stabilizing histone methylation. Recruits and targets histone methyltransferases KMT5B and KMT5C, leading to epigenetic transcriptional repression. Controls histone H4 'Lys-20' trimethylation. Probably acts as a transcription repressor by recruiting chromatin-modifying enzymes to promoters. Potent inhibitor of E2F-mediated trans-activation. May act as a tumor suppressor. The sequence is that of Retinoblastoma-like protein 1 from Rattus norvegicus (Rat).